Reading from the N-terminus, the 180-residue chain is Small ribosomal subunit protein uS4 (180 aa).

Residues 103–174 enclose the S4 RNA-binding domain; sequence RRLQTIVYKK…HPERMMIEKA (72 aa).

The protein belongs to the universal ribosomal protein uS4 family. In terms of assembly, part of the 30S ribosomal subunit. Contacts protein S5. The interaction surface between S4 and S5 is involved in control of translational fidelity.

In terms of biological role, one of the primary rRNA binding proteins, it binds directly to 16S rRNA where it nucleates assembly of the body of the 30S subunit. With S5 and S12 plays an important role in translational accuracy. The sequence is that of Small ribosomal subunit protein uS4 from Pyrococcus horikoshii (strain ATCC 700860 / DSM 12428 / JCM 9974 / NBRC 100139 / OT-3).